The following is a 422-amino-acid chain: 4-hydroxy-3-methylbut-2-en-1-yl diphosphate synthase (flavodoxin) (422 aa).

The [4Fe-4S] cluster site is built by C316, C319, C362, and E369.

It belongs to the IspG family. [4Fe-4S] cluster serves as cofactor.

It carries out the reaction (2E)-4-hydroxy-3-methylbut-2-enyl diphosphate + oxidized [flavodoxin] + H2O + 2 H(+) = 2-C-methyl-D-erythritol 2,4-cyclic diphosphate + reduced [flavodoxin]. The protein operates within isoprenoid biosynthesis; isopentenyl diphosphate biosynthesis via DXP pathway; isopentenyl diphosphate from 1-deoxy-D-xylulose 5-phosphate: step 5/6. Its function is as follows. Converts 2C-methyl-D-erythritol 2,4-cyclodiphosphate (ME-2,4cPP) into 1-hydroxy-2-methyl-2-(E)-butenyl 4-diphosphate. This Ehrlichia ruminantium (strain Welgevonden) protein is 4-hydroxy-3-methylbut-2-en-1-yl diphosphate synthase (flavodoxin).